We begin with the raw amino-acid sequence, 526 residues long: MSGYTVEVDKRRTFAIISHPDAGKTTITEKVLLFGQALQKAGTVKGKKSGQHAKSDWMEMEKDRGISITTSVMQFPYREALVNLLDTPGHEDFSEDTYRTLTAVDSCLMVIDSAKGVEQRTIKLMEVTRLRDTPIVTFMNKLDRDIRDPIELMDEVENILNIACAPITWPIGAGKEFKGVYHLLRDEVILYQNGMGHTIQDSRVIKGLDNPELDEAIGSYAQDLRDEMELVLGASHEFDLEAFLKGELTPVFFGTALGNFGVDHILDGIVEWAPRPQPRESDQRNVEPDESKFSGFVFKIQANMDPKHRDRVAFMRVCSGRYEQGMKMHHVRIGKDVNVSDALTFMAGDRNRAEAAYPGDIIGLHNHGTIRIGDTFTQGEKLRFTGVPNFAPEMFRRIRLKDPLKQKQLLKGLVQLSEEGAVQVFRPLDSNDLIVGAVGVLQFEVVVQRLKSEYKVEAIYEAISVATARWVYSKDAKKLEEFKRKCSNNLALDGGDNLTYVAPTMVNLNLSMERYPDIEFAKTREN.

The tr-type G domain maps to 9–277 (DKRRTFAIIS…GIVEWAPRPQ (269 aa)). GTP contacts are provided by residues 18–25 (SHPDAGKT), 86–90 (DTPGH), and 140–143 (NKLD).

Belongs to the TRAFAC class translation factor GTPase superfamily. Classic translation factor GTPase family. PrfC subfamily.

The protein localises to the cytoplasm. Functionally, increases the formation of ribosomal termination complexes and stimulates activities of RF-1 and RF-2. It binds guanine nucleotides and has strong preference for UGA stop codons. It may interact directly with the ribosome. The stimulation of RF-1 and RF-2 is significantly reduced by GTP and GDP, but not by GMP. The chain is Peptide chain release factor 3 from Shewanella loihica (strain ATCC BAA-1088 / PV-4).